A 120-amino-acid polypeptide reads, in one-letter code: Large ribosomal subunit protein uL18 (120 aa).

The protein belongs to the universal ribosomal protein uL18 family. Part of the 50S ribosomal subunit; part of the 5S rRNA/L5/L18/L25 subcomplex. Contacts the 5S and 23S rRNAs.

This is one of the proteins that bind and probably mediate the attachment of the 5S RNA into the large ribosomal subunit, where it forms part of the central protuberance. The chain is Large ribosomal subunit protein uL18 from Lawsonia intracellularis (strain PHE/MN1-00).